Consider the following 275-residue polypeptide: uncharacterized protein (275 aa).

3 helical membrane passes run 15 to 35, 39 to 59, and 70 to 90; these read LFLP…FLGS, AIMI…FGLF, and ILYL…VVYL. Positions 140–191 are disordered; that stretch reads SSKTDMDSQVAEAPQTEEGEPSVNQVPQEAGASHRVGPYQDQGLATDRNGNP.

The protein localises to the mitochondrion membrane. This is an uncharacterized protein from Arabidopsis thaliana (Mouse-ear cress).